Reading from the N-terminus, the 223-residue chain is Ribose-5-phosphate isomerase A (223 aa).

Substrate-binding positions include 28 to 31 (TGST), 81 to 84 (DGAD), and 94 to 97 (KGGG). The active-site Proton acceptor is glutamate 103. Lysine 121 lines the substrate pocket.

The protein belongs to the ribose 5-phosphate isomerase family. Homodimer.

The catalysed reaction is aldehydo-D-ribose 5-phosphate = D-ribulose 5-phosphate. Its pathway is carbohydrate degradation; pentose phosphate pathway; D-ribose 5-phosphate from D-ribulose 5-phosphate (non-oxidative stage): step 1/1. Functionally, catalyzes the reversible conversion of ribose-5-phosphate to ribulose 5-phosphate. The protein is Ribose-5-phosphate isomerase A of Janthinobacterium sp. (strain Marseille) (Minibacterium massiliensis).